Consider the following 529-residue polypeptide: Meiosis 1 arrest protein (529 aa).

Disordered stretches follow at residues 180–201 and 504–529; these read KGIQERSDSPSPTEEPSNDESS and AASKASSAAFLPSDSEEGEEERPSHT. A compositionally biased stretch (polar residues) spans 188-200; sequence SPSPTEEPSNDES. Ser-516 bears the Phosphoserine mark.

As to expression, expressed in germ cells of the testis. Expressed from spermatogonia to spermatids. Expressed at very low levels in lung, stomach, thymus. Not detected in Sertoli cells.

It localises to the cytoplasm. Required for meiosis I progression during spermatogenesis. In Mus musculus (Mouse), this protein is Meiosis 1 arrest protein (M1ap).